Consider the following 300-residue polypeptide: Ecto-ADP-ribosyltransferase 4 (300 aa).

The first 23 residues, 1 to 23 (MALWLPGGQLTLLLLLWVQQTPA), serve as a signal peptide directing secretion. The Extracellular portion of the chain corresponds to 24–269 (GSTEAPLKVD…QLLKACSKKC (246 aa)). 2 disulfides stabilise this stretch: C48–C259 and C161–C210. In terms of domain architecture, TR mART core spans 70 to 255 (KYYSRAWQKA…INLRSAGNMS (186 aa)). N110 and N157 each carry an N-linked (GlcNAc...) asparagine glycan. Q185 provides a ligand contact to NAD(+). N-linked (GlcNAc...) asparagine glycosylation is present at N201. S219 contributes to the NAD(+) binding site. N253 carries N-linked (GlcNAc...) asparagine glycosylation. A264 is lipidated: GPI-anchor amidated alanine. Positions 265-300 (CSKKCAPAPVVIGCLFLVTVVISSKSRAQRNLLAPF) are cleaved as a propeptide — removed in mature form. Residues 270-286 (APAPVVIGCLFLVTVVI) form a helical membrane-spanning segment. Topologically, residues 287 to 300 (SSKSRAQRNLLAPF) are cytoplasmic.

Belongs to the Arg-specific ADP-ribosyltransferase family.

Its subcellular location is the membrane. The protein localises to the cell membrane. It catalyses the reaction L-arginyl-[protein] + NAD(+) = N(omega)-(ADP-D-ribosyl)-L-arginyl-[protein] + nicotinamide + H(+). The protein is Ecto-ADP-ribosyltransferase 4 (Art4) of Mus musculus (Mouse).